The following is a 346-amino-acid chain: Phosphate-binding protein PstS (346 aa).

The first 25 residues, 1–25, serve as a signal peptide directing secretion; that stretch reads MKVMRTTVATVVAATLSMSAFSVFA. Phosphate-binding positions include 34-36, Ser63, Asp81, and 164-166; these read ATF and SGT.

This sequence belongs to the PstS family. The complex is composed of two ATP-binding proteins (PstB), two transmembrane proteins (PstC and PstA) and a solute-binding protein (PstS).

The protein resides in the periplasm. Its function is as follows. Part of the ABC transporter complex PstSACB involved in phosphate import. The chain is Phosphate-binding protein PstS (pstS) from Escherichia coli (strain K12).